Here is a 304-residue protein sequence, read N- to C-terminus: tRNA pseudouridine synthase B (304 aa).

D40 serves as the catalytic Nucleophile.

It belongs to the pseudouridine synthase TruB family. Type 1 subfamily.

It carries out the reaction uridine(55) in tRNA = pseudouridine(55) in tRNA. Responsible for synthesis of pseudouridine from uracil-55 in the psi GC loop of transfer RNAs. The sequence is that of tRNA pseudouridine synthase B from Halalkalibacterium halodurans (strain ATCC BAA-125 / DSM 18197 / FERM 7344 / JCM 9153 / C-125) (Bacillus halodurans).